We begin with the raw amino-acid sequence, 293 residues long: UDP-N-acetylglucosamine transferase subunit ALG13 (293 aa).

Belongs to the glycosyltransferase 28 family. Heterodimer with ALG14 to form a functional enzyme.

The protein resides in the endoplasmic reticulum. The catalysed reaction is an N-acetyl-alpha-D-glucosaminyl-diphospho-di-trans,poly-cis-dolichol + UDP-N-acetyl-alpha-D-glucosamine = an N,N'-diacetylchitobiosyl-diphospho-di-trans,poly-cis-dolichol + UDP + H(+). In terms of biological role, involved in protein N-glycosylation. Essential for the second step of the dolichol-linked oligosaccharide pathway. This chain is UDP-N-acetylglucosamine transferase subunit ALG13 (ALG13), found in Candida albicans (strain SC5314 / ATCC MYA-2876) (Yeast).